The following is a 468-amino-acid chain: ATP synthase subunit beta (468 aa).

Position 148–155 (148–155 (GGAGVGKT)) interacts with ATP.

This sequence belongs to the ATPase alpha/beta chains family. In terms of assembly, F-type ATPases have 2 components, CF(1) - the catalytic core - and CF(0) - the membrane proton channel. CF(1) has five subunits: alpha(3), beta(3), gamma(1), delta(1), epsilon(1). CF(0) has three main subunits: a(1), b(2) and c(9-12). The alpha and beta chains form an alternating ring which encloses part of the gamma chain. CF(1) is attached to CF(0) by a central stalk formed by the gamma and epsilon chains, while a peripheral stalk is formed by the delta and b chains.

The protein localises to the cell inner membrane. The enzyme catalyses ATP + H2O + 4 H(+)(in) = ADP + phosphate + 5 H(+)(out). Functionally, produces ATP from ADP in the presence of a proton gradient across the membrane. The catalytic sites are hosted primarily by the beta subunits. In Xanthomonas campestris pv. campestris (strain 8004), this protein is ATP synthase subunit beta.